A 555-amino-acid chain; its full sequence is DNA ligase (555 aa).

Position 247 (Glu247) interacts with ATP. The active-site N6-AMP-lysine intermediate is Lys249. Residues Arg254, Arg269, Glu298, Phe337, Arg411, and Lys417 each contribute to the ATP site.

Belongs to the ATP-dependent DNA ligase family. Requires Mg(2+) as cofactor.

The catalysed reaction is ATP + (deoxyribonucleotide)n-3'-hydroxyl + 5'-phospho-(deoxyribonucleotide)m = (deoxyribonucleotide)n+m + AMP + diphosphate.. Its function is as follows. DNA ligase that seals nicks in double-stranded DNA during DNA replication, DNA recombination and DNA repair. The sequence is that of DNA ligase from Archaeoglobus fulgidus (strain ATCC 49558 / DSM 4304 / JCM 9628 / NBRC 100126 / VC-16).